A 473-amino-acid chain; its full sequence is Envelope glycoprotein M (473 aa).

Over 1-32 (MGRPAPRGSPDSAPPTKGMTGARTAWWVWCVQ) the chain is Intravirion. A helical transmembrane segment spans residues 33 to 53 (VATFVVSAVCVTGLLVLASVF). Residues 54–90 (RARFPCFYATASSYAGVNSTAEVRGGVAVPLRLDTQS) lie on the Virion surface side of the membrane. The chain crosses the membrane as a helical span at residues 91-111 (LVGTYVITAVLLLAVAVYAVV). Residues 112-137 (GAVTSRYDRALDAGRRLAAARMAMPH) lie on the Intravirion side of the membrane. The helical transmembrane segment at 138-158 (ATLIAGNVCSWLLQITVLLLA) threads the bilayer. At 159–163 (HRISQ) the chain is on the virion surface side. A helical membrane pass occupies residues 164–184 (LAHLVYVLHFACLVYFAAHFC). At 185-216 (TRGVLSGTYLRQVHGLMELAPTHHRVVGPARA) the chain is on the intravirion side. Residues 217–237 (VLTNALLLGVFLCTADAAVSL) traverse the membrane as a helical segment. Residues 238 to 250 (NTIAAFNFNFSAP) lie on the Virion surface side of the membrane. A helical transmembrane segment spans residues 251 to 271 (GMLICLTVLFAILVVSLLLVV). At 272–280 (EGVLCHYVR) the chain is on the intravirion side. Residues 281–301 (VLVGPHLGAVAATGIVGLACE) traverse the membrane as a helical segment. At 302–318 (HYYTNGYYVVETQWPGA) the chain is on the virion surface side. The helical transmembrane segment at 319 to 339 (QTGVRVALALVAAFALGMAVL) threads the bilayer. The Intravirion segment spans residues 340 to 473 (RCTRAYLYHR…DPVYSTVRRW (134 aa)). 2 disordered regions span residues 371 to 399 (KRVR…PEYA) and 440 to 473 (HPRH…VRRW).

The protein belongs to the herpesviridae glycoprotein M family. In terms of assembly, interacts (via N-terminus) with gN (via N-terminus). The gM-gN heterodimer forms the gCII complex.

Its subcellular location is the virion membrane. The protein resides in the host Golgi apparatus. It localises to the host trans-Golgi network. It is found in the host endosome membrane. The protein localises to the host nucleus inner membrane. Envelope glycoprotein important for virion assembly and egress. Plays a role in the correct incorporation of gH-gL into virion membrane. Directs the glycoprotein N (gN) to the host trans-Golgi network. The sequence is that of Envelope glycoprotein M from Human herpesvirus 1 (strain 17) (HHV-1).